Reading from the N-terminus, the 558-residue chain is CTP synthase (558 aa).

The interval 1–271 (MAARQQTKHL…DAYVVRRLGL (271 aa)) is amidoligase domain. Residue serine 18 coordinates CTP. A UTP-binding site is contributed by serine 18. ATP is bound by residues 19–24 (SLGKGL) and aspartate 76. Mg(2+) is bound by residues aspartate 76 and glutamate 145. Residues 152 to 154 (DIE), 192 to 197 (KTKPTQ), and lysine 228 contribute to the CTP site. UTP is bound by residues 192–197 (KTKPTQ) and lysine 228. One can recognise a Glutamine amidotransferase type-1 domain in the interval 296-545 (TIALVGKYVD…IRAALLHRCP (250 aa)). L-glutamine is bound at residue glycine 359. Cysteine 386 serves as the catalytic Nucleophile; for glutamine hydrolysis. Residues 387-390 (LGLQ), glutamate 410, and arginine 471 contribute to the L-glutamine site. Catalysis depends on residues histidine 518 and glutamate 520.

The protein belongs to the CTP synthase family. As to quaternary structure, homotetramer.

The enzyme catalyses UTP + L-glutamine + ATP + H2O = CTP + L-glutamate + ADP + phosphate + 2 H(+). The catalysed reaction is L-glutamine + H2O = L-glutamate + NH4(+). It carries out the reaction UTP + NH4(+) + ATP = CTP + ADP + phosphate + 2 H(+). Its pathway is pyrimidine metabolism; CTP biosynthesis via de novo pathway; CTP from UDP: step 2/2. With respect to regulation, allosterically activated by GTP, when glutamine is the substrate; GTP has no effect on the reaction when ammonia is the substrate. The allosteric effector GTP functions by stabilizing the protein conformation that binds the tetrahedral intermediate(s) formed during glutamine hydrolysis. Inhibited by the product CTP, via allosteric rather than competitive inhibition. Catalyzes the ATP-dependent amination of UTP to CTP with either L-glutamine or ammonia as the source of nitrogen. Regulates intracellular CTP levels through interactions with the four ribonucleotide triphosphates. The polypeptide is CTP synthase (Acidothermus cellulolyticus (strain ATCC 43068 / DSM 8971 / 11B)).